The primary structure comprises 195 residues: Holliday junction branch migration complex subunit RuvA (195 aa).

A domain I region spans residues Met-1–Ser-64. Residues Asp-65 to Pro-142 form a domain II region. Residues Gly-143–Glu-151 form a flexible linker region. A domain III region spans residues Glu-151–Ala-195.

This sequence belongs to the RuvA family. Homotetramer. Forms an RuvA(8)-RuvB(12)-Holliday junction (HJ) complex. HJ DNA is sandwiched between 2 RuvA tetramers; dsDNA enters through RuvA and exits via RuvB. An RuvB hexamer assembles on each DNA strand where it exits the tetramer. Each RuvB hexamer is contacted by two RuvA subunits (via domain III) on 2 adjacent RuvB subunits; this complex drives branch migration. In the full resolvosome a probable DNA-RuvA(4)-RuvB(12)-RuvC(2) complex forms which resolves the HJ.

The protein localises to the cytoplasm. In terms of biological role, the RuvA-RuvB-RuvC complex processes Holliday junction (HJ) DNA during genetic recombination and DNA repair, while the RuvA-RuvB complex plays an important role in the rescue of blocked DNA replication forks via replication fork reversal (RFR). RuvA specifically binds to HJ cruciform DNA, conferring on it an open structure. The RuvB hexamer acts as an ATP-dependent pump, pulling dsDNA into and through the RuvAB complex. HJ branch migration allows RuvC to scan DNA until it finds its consensus sequence, where it cleaves and resolves the cruciform DNA. This is Holliday junction branch migration complex subunit RuvA from Chloroflexus aurantiacus (strain ATCC 29364 / DSM 637 / Y-400-fl).